The chain runs to 377 residues: Queuine tRNA-ribosyltransferase (377 aa).

Catalysis depends on aspartate 91, which acts as the Proton acceptor. Residues 91-95, aspartate 145, glutamine 189, and glycine 216 each bind substrate; that span reads DSGGF. An RNA binding region spans residues 247–253; it reads GVGKPED. Aspartate 266 functions as the Nucleophile in the catalytic mechanism. Positions 271–275 are RNA binding; important for wobble base 34 recognition; it reads TRNAR. Cysteine 304, cysteine 306, cysteine 309, and histidine 335 together coordinate Zn(2+).

Belongs to the queuine tRNA-ribosyltransferase family. As to quaternary structure, homodimer. Within each dimer, one monomer is responsible for RNA recognition and catalysis, while the other monomer binds to the replacement base PreQ1. It depends on Zn(2+) as a cofactor.

It carries out the reaction 7-aminomethyl-7-carbaguanine + guanosine(34) in tRNA = 7-aminomethyl-7-carbaguanosine(34) in tRNA + guanine. It functions in the pathway tRNA modification; tRNA-queuosine biosynthesis. In terms of biological role, catalyzes the base-exchange of a guanine (G) residue with the queuine precursor 7-aminomethyl-7-deazaguanine (PreQ1) at position 34 (anticodon wobble position) in tRNAs with GU(N) anticodons (tRNA-Asp, -Asn, -His and -Tyr). Catalysis occurs through a double-displacement mechanism. The nucleophile active site attacks the C1' of nucleotide 34 to detach the guanine base from the RNA, forming a covalent enzyme-RNA intermediate. The proton acceptor active site deprotonates the incoming PreQ1, allowing a nucleophilic attack on the C1' of the ribose to form the product. After dissociation, two additional enzymatic reactions on the tRNA convert PreQ1 to queuine (Q), resulting in the hypermodified nucleoside queuosine (7-(((4,5-cis-dihydroxy-2-cyclopenten-1-yl)amino)methyl)-7-deazaguanosine). This chain is Queuine tRNA-ribosyltransferase, found in Vibrio parahaemolyticus serotype O3:K6 (strain RIMD 2210633).